Here is a 519-residue protein sequence, read N- to C-terminus: LysM domain-containing protein ARB_03442 (519 aa).

An N-terminal signal peptide occupies residues 1 to 19 (MGQLKQLAGILALASPAIA). Asparagine 47 is a glycosylation site (N-linked (GlcNAc...) asparagine). One can recognise a LysM domain in the interval 312–358 (KYYNVVAGDTCASISSEFEVTMDELLTYNPELHPNCENLWANFAICV). Residues 314–358 (YNVVAGDTCASISSEFEVTMDELLTYNPELHPNCENLWANFAICV) are lysM domain. The span at 407–416 (PDAPDAQGQT) shows a compositional bias: low complexity. The tract at residues 407-458 (PDAPDAQGQTVHDDEPPEEPHIEEPPKDIPAGDDDDRKKAKLPLPSGKYPLP) is disordered. A compositionally biased stretch (basic and acidic residues) spans 417 to 433 (VHDDEPPEEPHIEEPPK). N-linked (GlcNAc...) asparagine glycosylation occurs at asparagine 460. In terms of domain architecture, Chitin-binding type-1 spans 467-510 (DGSCNEYISCVGSPFGVCCSTSGWCGYGKPWCGVGNCVSGYCDT). 4 cysteine pairs are disulfide-bonded: cysteine 470-cysteine 485, cysteine 476-cysteine 491, cysteine 484-cysteine 498, and cysteine 503-cysteine 508.

The protein localises to the secreted. Might have a role in sequestration of chitin oligosaccharides (breakdown products of fungal cell walls that are released during invasion and act as triggers of host immunity) to dampen host defense. This chain is LysM domain-containing protein ARB_03442, found in Arthroderma benhamiae (strain ATCC MYA-4681 / CBS 112371) (Trichophyton mentagrophytes).